Reading from the N-terminus, the 363-residue chain is MDNYTYSELLKSLQNKCDNIALIIKPEKIKQELERIEKEQEDPNFWQDVLKARDTNKEKVRLNRLLETYQKMKNSLDESVELFELAQNDSDEVTLSLLYEEAPTLEHSVQKVEIEIMLSGENDASNAIITIQPGAGGTESQDWASILYRMYLRWAERKSFKSEILDYQDGEEAGIKGVAFIIKGENAYGYLKNENGVHRLVRISPFDANAKRHTSFASVQISPELDDDIDIEIDEKDVRYDYYRASGAGGQHVNKTESAVRITHFPTGIVVQCQNDRSQHKNKASALKMLKSKLYELELEKQQSSAKNEEKSEIGWGHQIRSYVLAPYQQVKDARSNIAYSNVEAILDGDIDAILEGVLIAKA.

At glutamine 251 the chain carries N5-methylglutamine.

This sequence belongs to the prokaryotic/mitochondrial release factor family. Post-translationally, methylated by PrmC. Methylation increases the termination efficiency of RF2.

The protein resides in the cytoplasm. In terms of biological role, peptide chain release factor 2 directs the termination of translation in response to the peptide chain termination codons UGA and UAA. This is Peptide chain release factor 2 (prfB) from Helicobacter pylori (strain J99 / ATCC 700824) (Campylobacter pylori J99).